A 206-amino-acid chain; its full sequence is Threonine efflux protein (206 aa).

The helical transmembrane segment at 1–21 (MLMLFLTVAMVHIVALMSPGP) threads the bilayer. Residues 22 to 43 (DFFFVSQTAVSRSRKEAMMGVL) are Periplasmic-facing. Residues 44-64 (GITCGVMVWAGIALLGLHLII) form a helical membrane-spanning segment. Over 65–66 (EK) the chain is Cytoplasmic. A helical membrane pass occupies residues 67-87 (MAWLHTLIMVGGGLYLCWMGY). Over 88–149 (QMLRGALKKE…VGDNVGTTAR (62 aa)) the chain is Periplasmic. Residues 150-173 (WGIFALIIVETLAWFTVVASLFAL) traverse the membrane as a helical segment. At 174-206 (PQMRRGYQRLAKWIDGFAGALFAGFGIHLIISR) the chain is on the cytoplasmic side.

This sequence belongs to the Rht family.

Its subcellular location is the cell inner membrane. Its function is as follows. Conducts the efflux of threonine. This is Threonine efflux protein (rhtC) from Escherichia coli O157:H7.